Here is a 375-residue protein sequence, read N- to C-terminus: Ornithine carbamoyltransferase, chloroplastic (375 aa).

Carbamoyl phosphate is bound by residues 123-126 (SMRT), R174, H201, and Q204. L-ornithine contacts are provided by N232, D293, S297, and M298. C333 serves as the catalytic Proton acceptor. Carbamoyl phosphate is bound by residues 333–334 (CL) and R361.

The protein belongs to the aspartate/ornithine carbamoyltransferase superfamily. OTCase family. As to quaternary structure, homotrimer.

It localises to the plastid. Its subcellular location is the chloroplast. It catalyses the reaction carbamoyl phosphate + L-ornithine = L-citrulline + phosphate + H(+). The polypeptide is Ornithine carbamoyltransferase, chloroplastic (ARGF) (Pisum sativum (Garden pea)).